The chain runs to 238 residues: Orotidine 5'-phosphate decarboxylase (238 aa).

Residues Asp13, Lys35, 62–71 (DLKFHDIPNT), Thr121, Arg182, Gln191, Gly211, and Arg212 each bind substrate. Lys64 serves as the catalytic Proton donor.

Belongs to the OMP decarboxylase family. Type 1 subfamily. Homodimer.

The enzyme catalyses orotidine 5'-phosphate + H(+) = UMP + CO2. Its pathway is pyrimidine metabolism; UMP biosynthesis via de novo pathway; UMP from orotate: step 2/2. Catalyzes the decarboxylation of orotidine 5'-monophosphate (OMP) to uridine 5'-monophosphate (UMP). This chain is Orotidine 5'-phosphate decarboxylase, found in Saccharophagus degradans (strain 2-40 / ATCC 43961 / DSM 17024).